A 155-amino-acid polypeptide reads, in one-letter code: Ribosomal RNA large subunit methyltransferase H (155 aa).

S-adenosyl-L-methionine is bound by residues Leu-73, Gly-104, and 123-128 (LSPLTL).

The protein belongs to the RNA methyltransferase RlmH family. Homodimer.

It is found in the cytoplasm. The enzyme catalyses pseudouridine(1915) in 23S rRNA + S-adenosyl-L-methionine = N(3)-methylpseudouridine(1915) in 23S rRNA + S-adenosyl-L-homocysteine + H(+). Functionally, specifically methylates the pseudouridine at position 1915 (m3Psi1915) in 23S rRNA. The sequence is that of Ribosomal RNA large subunit methyltransferase H from Pseudomonas putida (strain ATCC 700007 / DSM 6899 / JCM 31910 / BCRC 17059 / LMG 24140 / F1).